We begin with the raw amino-acid sequence, 353 residues long: MLTFMEHILYSFYDASGWHRDNLYALLTHSSQNLIDFRVPEGVAMNVSALSTPNSASSYTLTNLGHIQGSVAYLSTSLSLPRPHSGTLDLHTVVPGYHKLDPINSQDRIYDTIWQGGKPIHRQDSLLFGRLALPTNTLEAMYVRRFNPTTQLLVTCVSGAHLKSGGALTLYWQKDCRQYAHELLYSTNEALLGARGLYNFGVDMSKPHIASRLSVGGEFYYGVLNKSPGMSTALRYVTQSAYTGSPLTMTLTCNPIMGEFSSTYSLRTGPSSSFSTRYDFNMYSYLSNLSMGAEVWKSRDSVFKLSSSLQDKTARVLWGGRYKDILVNTGVAFDYGGRVPDVTAIGVEFQYAC.

Belongs to the MDM10 family. In terms of assembly, component of the ER-mitochondria encounter structure (ERMES) or MDM complex, composed of MMM1, MDM10, MDM12 and MDM34. Associates with the mitochondrial outer membrane sorting assembly machinery SAM(core) complex.

It is found in the mitochondrion outer membrane. In terms of biological role, component of the ERMES/MDM complex, which serves as a molecular tether to connect the endoplasmic reticulum and mitochondria. Components of this complex are involved in the control of mitochondrial shape and protein biogenesis and may function in phospholipid exchange. MDM10 is involved in the late assembly steps of the general translocase of the mitochondrial outer membrane (TOM complex). Functions in the TOM40-specific route of the assembly of outer membrane beta-barrel proteins, including the association of TOM40 with the receptor TOM22 and small TOM proteins. Can associate with the SAM(core) complex as well as the MDM12-MMM1 complex, both involved in late steps of the major beta-barrel assembly pathway, that is responsible for biogenesis of all outer membrane beta-barrel proteins. May act as a switch that shuttles between both complexes and channels precursor proteins into the TOM40-specific pathway. Plays a role in mitochondrial morphology and in the inheritance of mitochondria. In Yarrowia lipolytica (strain CLIB 122 / E 150) (Yeast), this protein is Mitochondrial distribution and morphology protein 10.